We begin with the raw amino-acid sequence, 287 residues long: O-ureido-serine racemase (287 aa).

N20 is a substrate binding site. C81 serves as the catalytic Proton donor. Substrate contacts are provided by residues 82 to 83, N167, N200, and 218 to 219; these read GN and EY. C227 (proton acceptor) is an active-site residue. A substrate-binding site is contributed by 228–229; it reads GS.

It belongs to the diaminopimelate epimerase family. In terms of assembly, monomer.

Its subcellular location is the cytoplasm. It carries out the reaction O-ureido-L-serine = O-ureido-D-serine. Its activity is regulated as follows. Inhibited by thiol-inactivating reagents such as iodoacetamide and Hg(2+) ions. Its function is as follows. Involved in the biosynthesis of the antibiotic D-cycloserine (DCS), a cyclic structural analog of D-alanine, used as an antitubercular agent. Catalyzes the stereoinversion of O-ureido-L-serine to O-ureido-D-serine. The sequence is that of O-ureido-serine racemase from Streptomyces lavendulae.